Consider the following 110-residue polypeptide: Nucleotide-binding protein in fmt 3'region (110 aa).

Residue 8–15 (GLSGAGKT) participates in ATP binding. 57 to 60 (DARA) lines the GTP pocket.

It belongs to the RapZ-like family.

Functionally, displays ATPase and GTPase activities. This chain is Nucleotide-binding protein in fmt 3'region, found in Thermus thermophilus.